We begin with the raw amino-acid sequence, 126 residues long: Cell cycle protein GpsB (126 aa).

Residues 35–72 adopt a coiled-coil conformation; that stretch reads LDLVIKDYQTYQENIDRLTADNTRLFNKVEELNRQLSA.

Belongs to the GpsB family. In terms of assembly, forms polymers through the coiled coil domains. Interacts with PBP1, MreC and EzrA.

It localises to the cytoplasm. Its function is as follows. Divisome component that associates with the complex late in its assembly, after the Z-ring is formed, and is dependent on DivIC and PBP2B for its recruitment to the divisome. Together with EzrA, is a key component of the system that regulates PBP1 localization during cell cycle progression. Its main role could be the removal of PBP1 from the cell pole after pole maturation is completed. Also contributes to the recruitment of PBP1 to the division complex. Not essential for septum formation. In Latilactobacillus sakei subsp. sakei (strain 23K) (Lactobacillus sakei subsp. sakei), this protein is Cell cycle protein GpsB.